Reading from the N-terminus, the 878-residue chain is Alanine--tRNA ligase (878 aa).

4 residues coordinate Zn(2+): histidine 564, histidine 568, cysteine 666, and histidine 670.

The protein belongs to the class-II aminoacyl-tRNA synthetase family. In terms of assembly, homotetramer. It depends on Zn(2+) as a cofactor.

Its subcellular location is the cytoplasm. The enzyme catalyses tRNA(Ala) + L-alanine + ATP = L-alanyl-tRNA(Ala) + AMP + diphosphate. Its function is as follows. Catalyzes the attachment of alanine to tRNA(Ala) in a two-step reaction: alanine is first activated by ATP to form Ala-AMP and then transferred to the acceptor end of tRNA(Ala). Also edits incorrectly charged Ser-tRNA(Ala) and Gly-tRNA(Ala) via its editing domain. The sequence is that of Alanine--tRNA ligase from Buchnera aphidicola subsp. Acyrthosiphon pisum (strain APS) (Acyrthosiphon pisum symbiotic bacterium).